A 469-amino-acid chain; its full sequence is ATP-dependent protease ATPase subunit HslU (469 aa).

Residues Ile-24 and 66–71 (GVGKTE) contribute to the ATP site. The interval 159 to 179 (LFGSMNQPDEPAEEEVDQELK) is disordered. The ATP site is built by Asp-282, Glu-347, and Arg-419.

It belongs to the ClpX chaperone family. HslU subfamily. In terms of assembly, a double ring-shaped homohexamer of HslV is capped on each side by a ring-shaped HslU homohexamer. The assembly of the HslU/HslV complex is dependent on binding of ATP.

The protein resides in the cytoplasm. ATPase subunit of a proteasome-like degradation complex; this subunit has chaperone activity. The binding of ATP and its subsequent hydrolysis by HslU are essential for unfolding of protein substrates subsequently hydrolyzed by HslV. HslU recognizes the N-terminal part of its protein substrates and unfolds these before they are guided to HslV for hydrolysis. The polypeptide is ATP-dependent protease ATPase subunit HslU (Listeria innocua serovar 6a (strain ATCC BAA-680 / CLIP 11262)).